A 43-amino-acid chain; its full sequence is Methionine aminopeptidase (43 aa).

Belongs to the peptidase M24A family. Methionine aminopeptidase type 1 subfamily. In terms of assembly, monomer. The cofactor is Co(2+). Zn(2+) is required as a cofactor. It depends on Mn(2+) as a cofactor. Fe(2+) serves as cofactor.

It carries out the reaction Release of N-terminal amino acids, preferentially methionine, from peptides and arylamides.. Its function is as follows. Removes the N-terminal methionine from nascent proteins. The N-terminal methionine is often cleaved when the second residue in the primary sequence is small and uncharged (Met-Ala-, Cys, Gly, Pro, Ser, Thr, or Val). Requires deformylation of the N(alpha)-formylated initiator methionine before it can be hydrolyzed. This Klebsiella oxytoca protein is Methionine aminopeptidase (map).